A 532-amino-acid chain; its full sequence is MAPSSPRPALPALLVLLGALFPGPGNAQTSVSPSKVILPRGGSVLVTCSTSCDQPKLLGIETPLPKKELLLPGNNRKVYELSNVQEDSQPMCYSNCPDGQSTAKTFLTVYWTPERVELAPLPSWQPVGKNLTLRCQVEGGAPRANLTVVLLRGEKELKREPAVGEPAEVTTTVLVRRDHHGANFSCRTELDLRPQGLELFENTSAPYQLQTFVLPATPPQLVSPRVLEVDTQGTVVCSLDGLFPVSEAQVHLALGDQRLNPTVTYGNDSFSAKASVSVTAEDEGTQRLTCAVILGNQSQETLQTVTIYSFPAPNVILTKPEVSEGTEVTVKCEAHPRAKVTLNGVPAQPLGPRAQLLLKATPEDNGRSFSCSATLEVAGQLIHKNQTRELRVLYGPRLDERDCPGNWTWPENSQQTPMCQAWGNPLPELKCLKDGTFPLPIGESVTVTRDLEGTYLCRARSTQGEVTRKVTVNVLSPRYEIVIITVVAAAVIMGTAGLSTYLYNRQRKIKKYRLQQAQKGTPMKPNTQATPP.

Positions 1–27 (MAPSSPRPALPALLVLLGALFPGPGNA) are cleaved as a signal peptide. Over 28-480 (QTSVSPSKVI…TVNVLSPRYE (453 aa)) the chain is Extracellular. 2 consecutive Ig-like C2-type domains span residues 41 to 103 (GGSV…QSTA) and 128 to 193 (GKNL…LDLR). 2 disulfides stabilise this stretch: cysteine 48–cysteine 92 and cysteine 52–cysteine 96. N-linked (GlcNAc...) asparagine glycosylation occurs at asparagine 130. A disulfide bridge links cysteine 135 with cysteine 186. Asparagine 145 is a glycosylation site (N-linked (GlcNAc...) (complex) asparagine). Positions 152–154 (RGE) match the Cell attachment site; atypical motif. N-linked (GlcNAc...) asparagine glycosylation is found at asparagine 183, asparagine 202, asparagine 267, and asparagine 296. 2 consecutive Ig-like C2-type domains span residues 230-297 (DTQG…LGNQ) and 325-378 (GTEV…LEVA). A disulfide bridge connects residues cysteine 237 and cysteine 290. A disulfide bond links cysteine 332 and cysteine 371. Asparagine 385 and asparagine 406 each carry an N-linked (GlcNAc...) asparagine glycan. 2 disulfides stabilise this stretch: cysteine 403–cysteine 419 and cysteine 431–cysteine 457. In terms of domain architecture, Ig-like C2-type 5 spans 412-464 (NSQQTPMCQAWGNPLPELKCLKDGTFPLPIGESVTVTRDLEGTYLCRARSTQG). Residues 481–503 (IVIITVVAAAVIMGTAGLSTYLY) traverse the membrane as a helical segment. The Cytoplasmic portion of the chain corresponds to 504-532 (NRQRKIKKYRLQQAQKGTPMKPNTQATPP). Phosphothreonine occurs at positions 521 and 530.

This sequence belongs to the immunoglobulin superfamily. ICAM family. Homodimer. Interacts with MUC1 and promotes cell aggregation in epithelial cells. Interacts with ARHGEF26/SGEF. Interacts (on T cell side) with CD81, CD247 and CD9 at immunological synapses between antigen-presenting cells and T cells. As to quaternary structure, (Microbial infection) Interacts with major receptor group rhinovirus A-B capsid proteins. In terms of assembly, (Microbial infection) Interacts with Coxsackievirus A21 capsid proteins. In terms of processing, monoubiquitinated, which is promoted by MARCH9 and leads to endocytosis.

The protein localises to the membrane. Functionally, ICAM proteins are ligands for the leukocyte adhesion protein LFA-1 (integrin alpha-L/beta-2). During leukocyte trans-endothelial migration, ICAM1 engagement promotes the assembly of endothelial apical cups through ARHGEF26/SGEF and RHOG activation. In terms of biological role, (Microbial infection) Acts as a receptor for major receptor group rhinovirus A-B capsid proteins. (Microbial infection) Acts as a receptor for Coxsackievirus A21 capsid proteins. Its function is as follows. (Microbial infection) Upon Kaposi's sarcoma-associated herpesvirus/HHV-8 infection, is degraded by viral E3 ubiquitin ligase MIR2, presumably to prevent lysis of infected cells by cytotoxic T-lymphocytes and NK cell. In Homo sapiens (Human), this protein is Intercellular adhesion molecule 1 (ICAM1).